The sequence spans 570 residues: Proline--tRNA ligase (570 aa).

This sequence belongs to the class-II aminoacyl-tRNA synthetase family. ProS type 1 subfamily. In terms of assembly, homodimer.

Its subcellular location is the cytoplasm. The catalysed reaction is tRNA(Pro) + L-proline + ATP = L-prolyl-tRNA(Pro) + AMP + diphosphate. In terms of biological role, catalyzes the attachment of proline to tRNA(Pro) in a two-step reaction: proline is first activated by ATP to form Pro-AMP and then transferred to the acceptor end of tRNA(Pro). As ProRS can inadvertently accommodate and process non-cognate amino acids such as alanine and cysteine, to avoid such errors it has two additional distinct editing activities against alanine. One activity is designated as 'pretransfer' editing and involves the tRNA(Pro)-independent hydrolysis of activated Ala-AMP. The other activity is designated 'posttransfer' editing and involves deacylation of mischarged Ala-tRNA(Pro). The misacylated Cys-tRNA(Pro) is not edited by ProRS. The chain is Proline--tRNA ligase from Thermoanaerobacter sp. (strain X514).